Consider the following 685-residue polypeptide: Translation factor GUF1 homolog, mitochondrial (685 aa).

Residues 1 to 54 (MFSRLLNRGNGGVNKNITSGLLLRRTTTTTTRLSYINNSPTLSIRSFCSKSTTI) constitute a mitochondrion transit peptide. Positions 68–267 (DRIRNFSIIA…AVIDRIPPPQ (200 aa)) constitute a tr-type G domain. GTP is bound by residues 77 to 84 (AHIDHGKT), 160 to 164 (DTPGH), and 214 to 217 (NKID).

It belongs to the TRAFAC class translation factor GTPase superfamily. Classic translation factor GTPase family. LepA subfamily.

The protein resides in the mitochondrion inner membrane. The catalysed reaction is GTP + H2O = GDP + phosphate + H(+). In terms of biological role, promotes mitochondrial protein synthesis. May act as a fidelity factor of the translation reaction, by catalyzing a one-codon backward translocation of tRNAs on improperly translocated ribosomes. Binds to mitochondrial ribosomes in a GTP-dependent manner. This chain is Translation factor GUF1 homolog, mitochondrial (guf1), found in Dictyostelium discoideum (Social amoeba).